We begin with the raw amino-acid sequence, 748 residues long: Antigen peptide transporter 1 (748 aa).

The Cytoplasmic segment spans residues 1–15 (MASSRCPAPRGCRCL). The chain crosses the membrane as a helical span at residues 16–36 (PGASLAWLGTVLLFLADWVLL). Over 37–53 (RTALPRIFSLLVPTALP) the chain is Lumenal. Residues 54–76 (LLRVWAVGLSRWAVLWLGACGVL) traverse the membrane as a helical segment. At 77–92 (RATVGSKSENAGAQGW) the chain is on the cytoplasmic side. A helical membrane pass occupies residues 93-113 (LAALEPLAAALGLALPGLALF). Residues 114–133 (RELISWGAPGSADSTRLLHW) are Lumenal-facing. A helical membrane pass occupies residues 134–154 (GSHPSAFVVSYAAALPAAALW). Over 155–186 (HKLGSLWVPGGQGGSGNPVRRLLGCLGSETRR) the chain is Cytoplasmic. Residues 187–207 (LSLFLVLVVLSSLGEMAIPFF) form a helical membrane-spanning segment. The 284-residue stretch at 187–470 (LSLFLVLVVL…LLSIYPRVQK (284 aa)) folds into the ABC transmembrane type-1 domain. The Lumenal segment spans residues 208 to 227 (TGRLTDWILQDGSADTFTRN). Residues 228–248 (LTLMSILTIASAVLEFVGDGI) form a helical membrane-spanning segment. At 249–298 (YNNTMGHVHSHLQGEVFGAVLRQETEFFQQNQTGNITSRVTEDTSTLSDS) the chain is on the cytoplasmic side. A helical transmembrane segment spans residues 299-319 (LSENLSLFLWYLVRGLCLLGI). At 320–328 (MLWGSVSLT) the chain is on the lumenal side. Residues 329–349 (MVTLVTLPLLFLLPKKVGKWY) form a helical membrane-spanning segment. Residues 350–418 (QLLEVQVRES…AVNSWTTSIS (69 aa)) lie on the Cytoplasmic side of the membrane. Positions 375 to 420 (PTVRSFANEEGEAQKFREKLQEIKTLNQKEAVAYAVNSWTTSISGM) are part of the peptide-binding site. The chain crosses the membrane as a helical span at residues 419–439 (GMLLKVGILYIGGQLVTSGAV). Residues 440-443 (SSGN) are Lumenal-facing. Residues 444 to 464 (LVTFVLYQMQFTQAVEVLLSI) form a helical membrane-spanning segment. The segment at 453–487 (QFTQAVEVLLSIYPRVQKAVGSSEKIFEYLDRTPR) is part of the peptide-binding site. The Cytoplasmic segment spans residues 465–748 (YPRVQKAVGS…MVQAPADAPE (284 aa)). The region spanning 503–742 (VQFQDVSFAY…KGCYWAMVQA (240 aa)) is the ABC transporter domain. Residues 538-546 (GPNGSGKST), 641-647 (SQLSGGQ), and glutamine 701 each bind ATP. Serine 545 is a binding site for Mg(2+).

This sequence belongs to the ABC transporter superfamily. ABCB family. MHC peptide exporter (TC 3.A.1.209) subfamily. In terms of assembly, heterodimer of TAP1 and TAP2 (TAP1-TAP2). A component of the peptide loading complex (PLC), interacts via TAPBP with MHCI heterodimer; this interaction mediates peptide-MHCI assembly. Interacts with PSMB5 and PSMB8. Mg(2+) is required as a cofactor.

The protein localises to the endoplasmic reticulum membrane. The catalysed reaction is a peptide antigen(in) + ATP + H2O = a peptide antigen(out) + ADP + phosphate + H(+). ABC transporter associated with antigen processing. In complex with TAP2 mediates unidirectional translocation of peptide antigens from cytosol to endoplasmic reticulum (ER) for loading onto MHC class I (MHCI) molecules. Uses the chemical energy of ATP to export peptides against the concentration gradient. During the transport cycle alternates between 'inward-facing' state with peptide binding site facing the cytosol to 'outward-facing' state with peptide binding site facing the ER lumen. Peptide antigen binding to ATP-loaded TAP1-TAP2 induces a switch to hydrolysis-competent 'outward-facing' conformation ready for peptide loading onto nascent MHCI molecules. Subsequently ATP hydrolysis resets the transporter to the 'inward facing' state for a new cycle. As a component of the peptide loading complex (PLC), acts as a molecular scaffold essential for peptide-MHCI assembly and antigen presentation. This is Antigen peptide transporter 1 (TAP1) from Gorilla gorilla gorilla (Western lowland gorilla).